A 515-amino-acid chain; its full sequence is Protein pid-4 (515 aa).

Positions 496–515 are disordered; the sequence is DRSPQKFKFPASGSYMKPAN.

May interact with pid-2, app-1 and prmt-5.

It localises to the cytoplasm. The protein resides in the perinuclear region. It is found in the P-body. Together with pid-5, it is involved in gene silencing mediated by a class of 21 nucleotide PIWI-interacting RNAs (piRNAs) that possess a uracil residue at the 5'-end (also called 21U-RNAs) and guide the Piwi protein prg-1 to its DNA targets for silencing. Together with pid-5, it is required for the biogenesis of secondary and tertiary 22G-siRNAs. Specifically, promotes the production of 22G-siRNAs from the 5' end of target mRNAs. Together with pid-5, plays a role in small RNA-directed transgenerational epigenetic inheritance (also called RNAe) over several generations and germline immortality. Together with pid-5, plays a role in the formation of liquid-like condensates in the cytoplasm called Z granules. The polypeptide is Protein pid-4 (Caenorhabditis elegans).